The following is a 208-amino-acid chain: Uracil phosphoribosyltransferase (208 aa).

5-phospho-alpha-D-ribose 1-diphosphate is bound by residues arginine 78, arginine 103, and 130-138; that span reads DPMLATGGS. Uracil-binding positions include isoleucine 193 and 198–200; that span reads GDA. Position 199 (aspartate 199) interacts with 5-phospho-alpha-D-ribose 1-diphosphate.

It belongs to the UPRTase family. It depends on Mg(2+) as a cofactor.

It carries out the reaction UMP + diphosphate = 5-phospho-alpha-D-ribose 1-diphosphate + uracil. It functions in the pathway pyrimidine metabolism; UMP biosynthesis via salvage pathway; UMP from uracil: step 1/1. With respect to regulation, allosterically activated by GTP. Catalyzes the conversion of uracil and 5-phospho-alpha-D-ribose 1-diphosphate (PRPP) to UMP and diphosphate. This chain is Uracil phosphoribosyltransferase, found in Actinobacillus pleuropneumoniae serotype 5b (strain L20).